Here is a 121-residue protein sequence, read N- to C-terminus: Small ribosomal subunit protein uS13 (121 aa).

The interval 91–121 (HRRGLPVRGQKTKNNARTRKGPVKTVANKKK) is disordered.

It belongs to the universal ribosomal protein uS13 family. Part of the 30S ribosomal subunit. Forms a loose heterodimer with protein S19. Forms two bridges to the 50S subunit in the 70S ribosome.

Its function is as follows. Located at the top of the head of the 30S subunit, it contacts several helices of the 16S rRNA. In the 70S ribosome it contacts the 23S rRNA (bridge B1a) and protein L5 of the 50S subunit (bridge B1b), connecting the 2 subunits; these bridges are implicated in subunit movement. Contacts the tRNAs in the A and P-sites. In Staphylococcus haemolyticus (strain JCSC1435), this protein is Small ribosomal subunit protein uS13.